The chain runs to 282 residues: Secretory carrier-associated membrane protein 3 (282 aa).

Residues 1-36 (MAGKHGRNGFEDDDVNPFAGGSVPPANNSRLPPLSH) form a disordered region. Residues 1 to 117 (MAGKHGRNGF…EIPIHLQRMQ (117 aa)) lie on the Cytoplasmic side of the membrane. Residues 48-92 (LDSSKDLKKKEKELQAMEAELNKRERELKRKEEAAAQAGIVIEDK) adopt a coiled-coil conformation. A run of 4 helical transmembrane segments spans residues 118-138 (YLAF…IIAT), 148-168 (VIIW…AYVL), 185-205 (FGWF…AAVA), and 230-250 (IVGI…LLSI). Residues 251–282 (GVIQQVYMYFRGSGKAAEMKREAARGALSSAF) are Cytoplasmic-facing.

This sequence belongs to the SCAMP family.

The protein resides in the cell membrane. Its subcellular location is the cytoplasmic vesicle. The protein localises to the secretory vesicle membrane. Probably involved in membrane trafficking. This chain is Secretory carrier-associated membrane protein 3 (SCAMP3), found in Oryza sativa subsp. japonica (Rice).